The primary structure comprises 218 residues: Guanylate kinase (218 aa).

Residues 5-188 (GNLFILSAPS…ALLDLTTIVN (184 aa)) enclose the Guanylate kinase-like domain. 12–19 (APSGAGKS) serves as a coordination point for ATP.

This sequence belongs to the guanylate kinase family.

Its subcellular location is the cytoplasm. It catalyses the reaction GMP + ATP = GDP + ADP. Essential for recycling GMP and indirectly, cGMP. In Colwellia psychrerythraea (strain 34H / ATCC BAA-681) (Vibrio psychroerythus), this protein is Guanylate kinase.